A 116-amino-acid polypeptide reads, in one-letter code: MKLCVLTIASLLVTVTSLETQKEIAEGSELTREETPSLVEHKEDEAAAASEKRSCIEEWKTCEHSCECCGSSTICSSTWAEGKEIKLCKNEGGTFKKVLHFIQKGISKLKSCKEGN.

Residues 1 to 17 form the signal peptide; sequence MKLCVLTIASLLVTVTS. The propeptide occupies 18–53; sequence LETQKEIAEGSELTREETPSLVEHKEDEAAAASEKR. The disordered stretch occupies residues 24-46; it reads IAEGSELTREETPSLVEHKEDEA. Cystine bridges form between Cys55/Cys69, Cys62/Cys75, Cys66/Cys112, and Cys68/Cys88.

This sequence belongs to the neurotoxin 03 (Tx2) family. 02 subfamily. HNTX-XV sub-subfamily. Expressed by the venom gland.

The protein localises to the secreted. Functionally, probable ion channel inhibitor. The chain is U30-theraphotoxin-Cg1a from Chilobrachys guangxiensis (Chinese earth tiger tarantula).